We begin with the raw amino-acid sequence, 484 residues long: Chromosomal replication initiator protein DnaA (484 aa).

The domain I, interacts with DnaA modulators stretch occupies residues 1–83; it reads MQPPSQDWAS…LAWRTVWPGI (83 aa). Residues 83–146 are domain II; that stretch reads IAEVKVSVRN…EKKAEGEDQN (64 aa). The tract at residues 110-146 is disordered; it reads GDQPRPLPKKPAKKKQSVPATPKSTSPEKKAEGEDQN. Positions 116-125 are enriched in basic residues; it reads LPKKPAKKKQ. Positions 135 to 146 are enriched in basic and acidic residues; the sequence is SPEKKAEGEDQN. Residues 147-364 form a domain III, AAA+ region region; sequence QFEERYNFDN…GALNRVVAYA (218 aa). Residues glycine 191, glycine 193, lysine 194, and threonine 195 each contribute to the ATP site. The domain IV, binds dsDNA stretch occupies residues 365-484; it reads TLSNRPINMD…VRLLMRQFEG (120 aa).

The protein belongs to the DnaA family. In terms of assembly, oligomerizes as a right-handed, spiral filament on DNA at oriC.

It localises to the cytoplasm. Functionally, plays an essential role in the initiation and regulation of chromosomal replication. ATP-DnaA binds to the origin of replication (oriC) to initiate formation of the DNA replication initiation complex once per cell cycle. Binds the DnaA box (a 9 base pair repeat at the origin) and separates the double-stranded (ds)DNA. Forms a right-handed helical filament on oriC DNA; dsDNA binds to the exterior of the filament while single-stranded (ss)DNA is stabiized in the filament's interior. The ATP-DnaA-oriC complex binds and stabilizes one strand of the AT-rich DNA unwinding element (DUE), permitting loading of DNA polymerase. After initiation quickly degrades to an ADP-DnaA complex that is not apt for DNA replication. Binds acidic phospholipids. This chain is Chromosomal replication initiator protein DnaA, found in Zymomonas mobilis subsp. mobilis (strain ATCC 31821 / ZM4 / CP4).